We begin with the raw amino-acid sequence, 300 residues long: 33 kDa chaperonin (300 aa).

Disulfide bonds link cysteine 240-cysteine 242 and cysteine 273-cysteine 276.

This sequence belongs to the HSP33 family. In terms of processing, under oxidizing conditions two disulfide bonds are formed involving the reactive cysteines. Under reducing conditions zinc is bound to the reactive cysteines and the protein is inactive.

The protein resides in the cytoplasm. Its function is as follows. Redox regulated molecular chaperone. Protects both thermally unfolding and oxidatively damaged proteins from irreversible aggregation. Plays an important role in the bacterial defense system toward oxidative stress. This chain is 33 kDa chaperonin, found in Cyanothece sp. (strain PCC 7425 / ATCC 29141).